Here is a 185-residue protein sequence, read N- to C-terminus: MRKDAKENRQRIEEIAHKLFDEEGVENISMNRIAKELGIGMGTLYRHFKDKSDLCYYVIQRDLDIFITHFKQIKDDYHSNYEVMQVSLDYLLQFKIDNKALLQCIEAGNNKLRFYQSAFYQELFDFYYDLFKSDDDTYTKFKTDMLLQSLSTSVFAFQIEHRHISIEAYRNYLLNIYLDEVGRND.

An HTH tetR-type domain is found at 6–66 (KENRQRIEEI…YVIQRDLDIF (61 aa)). The H-T-H motif DNA-binding region spans 29 to 48 (SMNRIAKELGIGMGTLYRHF).

This is HTH-type transcriptional regulator SACOL2593 from Staphylococcus aureus (strain COL).